A 362-amino-acid polypeptide reads, in one-letter code: Atypical chemokine receptor 3 (362 aa).

The Extracellular segment spans residues 1-40; it reads MDLHLFDYAEPGNFSDISWPCNSSDCIVVDTVLCPNMPNK. N-linked (GlcNAc...) asparagine glycans are attached at residues Asn13, Asn22, and Asn39. Residues 41-61 traverse the membrane as a helical segment; sequence SVLLYTLSFIYIFIFVIGMIA. Residues 62–81 are Cytoplasmic-facing; sequence NSVVVWVNIQAKTTGYDTHC. A helical membrane pass occupies residues 82–102; that stretch reads YILNLAIADLWVVVTIPVWVV. The Extracellular portion of the chain corresponds to 103 to 118; it reads SLVQHNQWPMGELTCK. A disulfide bridge links Cys117 with Cys196. A helical transmembrane segment spans residues 119 to 139; it reads ITHLIFSINLFGSIFFLTCMS. Topologically, residues 140–162 are cytoplasmic; that stretch reads VDRYLSITYFASTSSRRKKVVRR. Residues 163-183 form a helical membrane-spanning segment; that stretch reads AVCVLVWLLAFCVSLPDTYYL. Topologically, residues 184–213 are extracellular; the sequence is KTVTSASNNETYCRSFYPEHSVKEWLISME. Residues 214-234 form a helical membrane-spanning segment; that stretch reads LVSVVLGFAIPFCVIAVFYCL. Residues 235–252 lie on the Cytoplasmic side of the membrane; that stretch reads LARAISASSDQEKQSSRK. The chain crosses the membrane as a helical span at residues 253-273; it reads IIFSYVVVFLVCWLPYHVVVL. The Extracellular portion of the chain corresponds to 274–296; that stretch reads LDIFSILHYIPFTCQLENFLFTA. The helical transmembrane segment at 297 to 319 threads the bilayer; that stretch reads LHVTQCLSLVHCCVNPVLYSFIN. Topologically, residues 320–362 are cytoplasmic; the sequence is RNYRYELMKAFIFKYSAKTGLTKLIDASRVSETEYSALEQNAK. Residues 324-362 are C-terminal cytoplasmic tail; the sequence is YELMKAFIFKYSAKTGLTKLIDASRVSETEYSALEQNAK. Phosphoserine is present on residues Ser347, Ser350, and Ser355.

Belongs to the G-protein coupled receptor 1 family. Atypical chemokine receptor subfamily. In terms of assembly, homodimer. Can form heterodimers with CXCR4; heterodimerization may regulate CXCR4 signaling activity. Interacts with ARRB1 and ARRB2. In terms of processing, the Ser/Thr residues in the C-terminal cytoplasmic tail may be phosphorylated. Post-translationally, ubiquitinated at the Lys residues in its C-terminal cytoplasmic tail and is essential for correct trafficking from and to the cell membrane. Deubiquitinated by CXCL12-stimulation in a reversible manner.

It localises to the cell membrane. The protein resides in the early endosome. The protein localises to the recycling endosome. Its function is as follows. Atypical chemokine receptor that controls chemokine levels and localization via high-affinity chemokine binding that is uncoupled from classic ligand-driven signal transduction cascades, resulting instead in chemokine sequestration, degradation, or transcytosis. Also known as interceptor (internalizing receptor) or chemokine-scavenging receptor or chemokine decoy receptor. Acts as a receptor for chemokines CXCL11 and CXCL12/SDF1. Chemokine binding does not activate G-protein-mediated signal transduction but instead induces beta-arrestin recruitment, leading to ligand internalization and activation of MAPK signaling pathway. Required for regulation of CXCR4 protein levels in migrating interneurons, thereby adapting their chemokine responsiveness. In glioma cells, transduces signals via MEK/ERK pathway, mediating resistance to apoptosis. Promotes cell growth and survival. Not involved in cell migration, adhesion or proliferation of normal hematopoietic progenitors but activated by CXCL11 in malignant hemapoietic cells, leading to phosphorylation of ERK1/2 (MAPK3/MAPK1) and enhanced cell adhesion and migration. Plays a regulatory role in CXCR4-mediated activation of cell surface integrins by CXCL12. Required for heart valve development. Regulates axon guidance in the oculomotor system through the regulation of CXCL12 levels. This is Atypical chemokine receptor 3 (ACKR3) from Canis lupus familiaris (Dog).